Consider the following 177-residue polypeptide: Adenine phosphoribosyltransferase (177 aa).

Belongs to the purine/pyrimidine phosphoribosyltransferase family. In terms of assembly, homodimer.

It localises to the cytoplasm. The enzyme catalyses AMP + diphosphate = 5-phospho-alpha-D-ribose 1-diphosphate + adenine. It functions in the pathway purine metabolism; AMP biosynthesis via salvage pathway; AMP from adenine: step 1/1. In terms of biological role, catalyzes a salvage reaction resulting in the formation of AMP, that is energically less costly than de novo synthesis. This is Adenine phosphoribosyltransferase from Chlorobaculum tepidum (strain ATCC 49652 / DSM 12025 / NBRC 103806 / TLS) (Chlorobium tepidum).